We begin with the raw amino-acid sequence, 128 residues long: UPF0102 protein Mext_0406 (128 aa).

It belongs to the UPF0102 family.

The sequence is that of UPF0102 protein Mext_0406 from Methylorubrum extorquens (strain PA1) (Methylobacterium extorquens).